The following is a 618-amino-acid chain: Pyranose 2-oxidase (618 aa).

The residue at position 170 (histidine 170) is a Tele-8alpha-FAD histidine. The substrate site is built by glutamine 441 and histidine 443. The active-site Proton acceptor is the histidine 540. Residue asparagine 583 is part of the active site.

This sequence belongs to the GMC oxidoreductase family. In terms of assembly, homotetramer. It depends on FAD as a cofactor.

The catalysed reaction is D-glucose + O2 = 2-dehydro-D-glucose + H2O2. In terms of biological role, catalyzes the oxidation of various aldopyranoses and disaccharides on carbon-2 to the corresponding 2-keto sugars concomitant with the reduction of O(2) to H(2)O(2). This Lyophyllum shimeji (Hon-shimeji) protein is Pyranose 2-oxidase (p2ox).